The following is a 556-amino-acid chain: 5-aminolevulinate synthase, mitochondrial (556 aa).

The transit peptide at 1 to 46 directs the protein to the mitochondrion; the sequence is MDSLARQSAKICPFVSRVTSSMQQVQVLHKTNMSAMAQQCPVMRRA. Substrate is bound by residues Arg-105, Ser-218, and Lys-237. Pyridoxal 5'-phosphate is bound by residues Ser-270, His-298, and Thr-342. The active site involves Lys-345. Lys-345 carries the N6-(pyridoxal phosphate)lysine modification. Thr-374 and Ser-375 together coordinate pyridoxal 5'-phosphate. Thr-460 provides a ligand contact to substrate.

Belongs to the class-II pyridoxal-phosphate-dependent aminotransferase family. In terms of assembly, homodimer. Pyridoxal 5'-phosphate is required as a cofactor.

It is found in the mitochondrion matrix. The catalysed reaction is succinyl-CoA + glycine + H(+) = 5-aminolevulinate + CO2 + CoA. Its pathway is porphyrin-containing compound metabolism; protoporphyrin-IX biosynthesis; 5-aminolevulinate from glycine: step 1/1. Functionally, catalyzes the synthesis of 5-aminolevulinate (ALA) from succinyl-CoA and glycine, the first and rate-limiting step in heme biosynthesis. This chain is 5-aminolevulinate synthase, mitochondrial (HEM1), found in Eremothecium gossypii (strain ATCC 10895 / CBS 109.51 / FGSC 9923 / NRRL Y-1056) (Yeast).